The chain runs to 554 residues: Intraflagellar transport protein 56 (554 aa).

A disordered region spans residues 1-27 (MMLSRAKPAVGGESPHTDKRKKKGRKI). Basic residues predominate over residues 18–27 (DKRKKKGRKI). TPR repeat units lie at residues 57–90 (DDTN…ENCN), 92–125 (EVWV…LQNR), 151–184 (KEDQ…NREY), and 468–501 (ANDC…EGKR).

This sequence belongs to the IFT56 family. As to quaternary structure, component of the IFT complex B. Interacts with IFT46; the interaction is direct. High expression detected in testis. Detected also retina, kidney, lung and brain tissue. The expression level is low in spleen. Expressed in the developing liver. Present in the airway epithelial cells and the testes (at protein level).

It localises to the cell projection. It is found in the cilium. Its function is as follows. Component of the intraflagellar transport (IFT) complex B required for transport of proteins in the motile cilium. Required for transport of specific ciliary cargo proteins related to motility, while it is neither required for IFT complex B assembly or motion nor for cilium assembly. Required for efficient coupling between the accumulation of GLI2 and GLI3 at the ciliary tips and their dissociation from the negative regulator SUFU. Plays a key role in maintaining the integrity of the IFT complex B and the proper ciliary localization of the IFT complex B components. Not required for IFT complex A ciliary localization or function. Essential for maintaining proper microtubule organization within the ciliary axoneme. The protein is Intraflagellar transport protein 56 of Mus musculus (Mouse).